A 264-amino-acid polypeptide reads, in one-letter code: Thymidylate synthase (264 aa).

Residue Arg-21 coordinates dUMP. His-51 lines the (6R)-5,10-methylene-5,6,7,8-tetrahydrofolate pocket. Arg-126–Arg-127 provides a ligand contact to dUMP. Catalysis depends on Cys-146, which acts as the Nucleophile. DUMP contacts are provided by residues Arg-166 to Asp-169, Asn-177, and His-207 to Tyr-209. Residue Asp-169 participates in (6R)-5,10-methylene-5,6,7,8-tetrahydrofolate binding. Ala-263 is a (6R)-5,10-methylene-5,6,7,8-tetrahydrofolate binding site.

It belongs to the thymidylate synthase family. Bacterial-type ThyA subfamily. Homodimer.

The protein localises to the cytoplasm. It catalyses the reaction dUMP + (6R)-5,10-methylene-5,6,7,8-tetrahydrofolate = 7,8-dihydrofolate + dTMP. The protein operates within pyrimidine metabolism; dTTP biosynthesis. In terms of biological role, catalyzes the reductive methylation of 2'-deoxyuridine-5'-monophosphate (dUMP) to 2'-deoxythymidine-5'-monophosphate (dTMP) while utilizing 5,10-methylenetetrahydrofolate (mTHF) as the methyl donor and reductant in the reaction, yielding dihydrofolate (DHF) as a by-product. This enzymatic reaction provides an intracellular de novo source of dTMP, an essential precursor for DNA biosynthesis. The polypeptide is Thymidylate synthase (Shewanella amazonensis (strain ATCC BAA-1098 / SB2B)).